The following is a 367-amino-acid chain: Terpene cyclase verU1 (367 aa).

Residues 8-28 traverse the membrane as a helical segment; it reads IRCSLLLLGLVGIYTVWISSF. Residue asparagine 50 is glycosylated (N-linked (GlcNAc...) asparagine). The next 8 membrane-spanning stretches (helical) occupy residues 57–77, 85–105, 120–140, 169–189, 197–217, 239–259, 292–312, and 327–347; these read FTGI…YWPV, LSLI…LFAL, MAMF…PIYC, CLLG…PAVV, IIAL…LTHL, ISAM…SLLA, FQWD…GLHI, and LIPE…AALY. N-linked (GlcNAc...) asparagine glycosylation occurs at asparagine 352.

Belongs to the membrane-bound ascI terpene cyclase family.

It is found in the membrane. It functions in the pathway secondary metabolite biosynthesis; terpenoid biosynthesis. The protein operates within mycotoxin biosynthesis. Its function is as follows. Terpene cyclase; part of the gene cluster that mediates the biosynthesis of the neurotoxin verrucosidin, a methylated alpha-pyrone polyketide that inhibits oxidative phosphorylation in mitochondria and thereby causes neurological diseases. The carbon backbone of verrucosidin is synthesized by the HR-PKS verA, and further modified by the other verrucodidin cluster enzymes. This chain is Terpene cyclase verU1, found in Penicillium polonicum.